The primary structure comprises 150 residues: 3-hydroxyacyl-[acyl-carrier-protein] dehydratase FabZ (150 aa).

Residue His-54 is part of the active site.

This sequence belongs to the thioester dehydratase family. FabZ subfamily.

It localises to the cytoplasm. It catalyses the reaction a (3R)-hydroxyacyl-[ACP] = a (2E)-enoyl-[ACP] + H2O. Its function is as follows. Involved in unsaturated fatty acids biosynthesis. Catalyzes the dehydration of short chain beta-hydroxyacyl-ACPs and long chain saturated and unsaturated beta-hydroxyacyl-ACPs. The chain is 3-hydroxyacyl-[acyl-carrier-protein] dehydratase FabZ from Aliivibrio fischeri (strain ATCC 700601 / ES114) (Vibrio fischeri).